A 596-amino-acid polypeptide reads, in one-letter code: NADH-quinone oxidoreductase subunit C/D (596 aa).

The tract at residues 1–186 (MTDLTAQEPA…SPFELTKAKQ (186 aa)) is NADH dehydrogenase I subunit C. The segment at 210-596 (DFMFLNLGPN…IDFVMSDVDR (387 aa)) is NADH dehydrogenase I subunit D.

The protein in the N-terminal section; belongs to the complex I 30 kDa subunit family. It in the C-terminal section; belongs to the complex I 49 kDa subunit family. In terms of assembly, NDH-1 is composed of 13 different subunits. Subunits NuoB, CD, E, F, and G constitute the peripheral sector of the complex.

The protein resides in the cell inner membrane. It catalyses the reaction a quinone + NADH + 5 H(+)(in) = a quinol + NAD(+) + 4 H(+)(out). Its function is as follows. NDH-1 shuttles electrons from NADH, via FMN and iron-sulfur (Fe-S) centers, to quinones in the respiratory chain. The immediate electron acceptor for the enzyme in this species is believed to be ubiquinone. Couples the redox reaction to proton translocation (for every two electrons transferred, four hydrogen ions are translocated across the cytoplasmic membrane), and thus conserves the redox energy in a proton gradient. This chain is NADH-quinone oxidoreductase subunit C/D, found in Shigella flexneri serotype 5b (strain 8401).